Reading from the N-terminus, the 708-residue chain is ABC transporter G family member 18 (708 aa).

One can recognise an ABC transporter domain in the interval 75-317 (RRRFDFSRRK…FSSFGRPIPE (243 aa)). 109–116 (GGSGAGKS) lines the ATP pocket. In terms of domain architecture, ABC transmembrane type-2 spans 402–612 (AETFILAKRY…PYEAVLINEF (211 aa)). 7 consecutive transmembrane segments (helical) span residues 421 to 441 (LIGM…TVYW), 456 to 476 (FFAF…PVFI), 508 to 528 (LLAL…LSGG), 537 to 557 (LIIY…SGLI), 560 to 580 (VMMS…LGGF), 589 to 609 (LYWI…AVLI), and 681 to 701 (LWIT…SLLF).

It belongs to the ABC transporter superfamily. ABCG family. Eye pigment precursor importer (TC 3.A.1.204) subfamily.

It is found in the membrane. The sequence is that of ABC transporter G family member 18 (ABCG18) from Arabidopsis thaliana (Mouse-ear cress).